Reading from the N-terminus, the 67-residue chain is Light-harvesting protein B-870 alpha chain (67 aa).

Methionine 1 bears the N-formylmethionine; in strain DSM 149 and DSM 151 mark. Residues 1–12 (MWRIWRLFDPMR) lie on the Cytoplasmic side of the membrane. Residues 13–33 (AMVAQAVFLLGLAVLIHLMLL) traverse the membrane as a helical segment. Histidine 29 serves as a coordination point for a bacteriochlorophyll. Residues 34-67 (GTNKYNWLDGAKKAPAATAVAPVPAEVTSLAQAK) are Periplasmic-facing.

This sequence belongs to the antenna complex alpha subunit family. An alpha/beta heterodimer. The core complex is formed by different alpha and beta chains, binding bacteriochlorophyll molecules, and arranged most probably in tetrameric structures disposed around the reaction center. The non-pigmented gamma chains may constitute additional components. The N-terminus is blocked.

Its subcellular location is the cell inner membrane. In terms of biological role, antenna complexes are light-harvesting systems, which transfer the excitation energy to the reaction centers. The polypeptide is Light-harvesting protein B-870 alpha chain (pufA) (Rubrivivax gelatinosus (Rhodocyclus gelatinosus)).